A 284-amino-acid polypeptide reads, in one-letter code: N-methyltransferase sirN (284 aa).

It belongs to the methyltransferase superfamily. LaeA methyltransferase family.

It functions in the pathway mycotoxin biosynthesis. N-methyltransferase; part of the gene cluster that mediates the biosynthesis of sirodesmin PL, an epipolythiodioxopiperazine (ETP) characterized by a disulfide bridged cyclic dipeptide and that acts as a phytotoxin which is involved in the blackleg didease of canola. SirD catalyzes the O-prenylation of L-tyrosine (L-Tyr) in the presence of dimethylallyl diphosphate (DMAPP) to yield 4-O-dimethylallyl-L-Tyr, and therefore represents probably the first pathway-specific enzyme in the biosynthesis of sirodesmin PL. 4-O-dimethylallyl-L-Tyr, then undergoes condensation with L-Ser in a reaction catalyzed by the non-ribosomal peptide synthase sirP to form the diketopiperazine (DKP) backbone. Further bishydroxylation of the DKP performed by the cytochrome P450 monooxygenase sirC leads to the production of the intermediate phomamide. This step is essential to form the reactive thiol group required for toxicity of sirodesmin PL. The next steps of sirodesmin biosynthesis are not well understood yet but some predictions could be made from intermediate compounds identification. Phomamide is converted into phomalizarine via oxidation, probably by sirT. Further oxidation, methylation (by sirM or sirN) and reduction steps convert phomalizarine to deacetyl sirodesmin. Finally, acetyltransferase sirH probably acetylates deacetyl sirodesmin to produce sirodesmin PL. In Leptosphaeria maculans (Blackleg fungus), this protein is N-methyltransferase sirN.